The chain runs to 55 residues: Conotoxin vc5b (55 aa).

The signal sequence occupies residues 1–15 (VILLLLIASAPSVDA). Residues 16-41 (QPKTKDDVPLAPLHDNAKSALQHLNQ) constitute a propeptide that is removed on maturation. Position 53 is a glutamine amide (Q53).

Contains 2 disulfide bonds that can be either 'C1-C3, C2-C4' or 'C1-C4, C2-C3', since these disulfide connectivities have been observed for conotoxins with cysteine framework V (for examples, see AC P0DQQ7 and AC P81755). Expressed by the venom duct.

It localises to the secreted. This Conus victoriae (Queen Victoria cone) protein is Conotoxin vc5b.